A 292-amino-acid chain; its full sequence is Elongation factor Ts (292 aa).

Residues 79–82 (TDFV) form an involved in Mg(2+) ion dislocation from EF-Tu region.

It belongs to the EF-Ts family.

It is found in the cytoplasm. Functionally, associates with the EF-Tu.GDP complex and induces the exchange of GDP to GTP. It remains bound to the aminoacyl-tRNA.EF-Tu.GTP complex up to the GTP hydrolysis stage on the ribosome. The protein is Elongation factor Ts of Xanthomonas campestris pv. campestris (strain B100).